The chain runs to 108 residues: Putative lipid-binding protein AIR1B (108 aa).

Positions 1-23 (MAPRTSLALFVSLNLLFFTCTSA) are cleaved as a signal peptide. Disulfide bonds link C28–C55, C35–C54, and C71–C107.

The protein belongs to the plant LTP family. PEARLI1 subfamily.

Its subcellular location is the secreted. The sequence is that of Putative lipid-binding protein AIR1B (AIR1B) from Arabidopsis thaliana (Mouse-ear cress).